Consider the following 417-residue polypeptide: RH-like protein IC (417 aa).

11 helical membrane-spanning segments follow: residues 12–32 (CLPL…YFFT), 44–64 (LVAS…GFGF), 77–97 (VAFN…LDGF), 125–145 (ISAG…MVLV), 172–192 (FYVF…KPLP), 203–223 (TIPS…WPSF), 238–258 (VFNT…VSSL), 265–285 (INMT…GTSC), 287–307 (LITS…ISIG), 331–351 (NFSL…VLHT), and 358–378 (MVGF…AIAV).

Belongs to the ammonium transporter (TC 2.A.49) family. Rh subfamily.

It localises to the membrane. May be part of an oligomeric complex which is likely to have a transport or channel function in the erythrocyte membrane. The sequence is that of RH-like protein IC from Gorilla gorilla gorilla (Western lowland gorilla).